Reading from the N-terminus, the 321-residue chain is G-protein coupled receptor homolog ECRF3 (321 aa).

Topologically, residues 1-34 (MEVKLDFSSEDFSNYSYNYSGDIYYGDVAPCVVN) are extracellular. N-linked (GlcNAc...) asparagine; by host glycans are attached at residues N14 and N18. A helical membrane pass occupies residues 35–51 (FLISESALAFIYVLMFL). Topologically, residues 52 to 76 (CNAIGNSLVLRTFLKYRAQAQSFDY) are cytoplasmic. Residues 77-93 (LMMGFCLNSLFLAGYLL) traverse the membrane as a helical segment. Over 94–124 (MRLLRMFEIFMNTELCKLEAFFLNLSIYWSP) the chain is Extracellular. N-linked (GlcNAc...) asparagine; by host glycosylation occurs at N117. Residues 125–141 (FILVFISVLRCLLIFCA) traverse the membrane as a helical segment. At 142–149 (TRLWVKKT) the chain is on the cytoplasmic side. Residues 150–166 (LIGQVFLCCSFVLACFG) form a helical membrane-spanning segment. Over 167–196 (ALPHVMVTSYYEPSSCIEEDGVLTEQLRTK) the chain is Extracellular. Residues 197 to 215 (LNTFHTWYSFAGPLFITVI) form a helical membrane-spanning segment. At 216-234 (CYSMSCYKLFKTKLSKRAE) the chain is on the cytoplasmic side. The chain crosses the membrane as a helical span at residues 235 to 251 (VVTIITMTTLLFIVFCI). Residues 252-286 (PYYIMESIDTLLRVGVIEETCAKRSAIVYGIQCTY) lie on the Extracellular side of the membrane. The chain crosses the membrane as a helical span at residues 287 to 303 (MLLVLYYCMLPLMFAMF). Topologically, residues 304–321 (GSLFRQRMAAWCKTICHC) are cytoplasmic.

The protein belongs to the G-protein coupled receptor 1 family.

It localises to the host cell membrane. Functionally, may be highly relevant to the process of cellular transformation and rapid T-cell proliferation effected by HVS during latent infections of T-cells in susceptible hosts. The polypeptide is G-protein coupled receptor homolog ECRF3 (74) (Saimiri sciureus (Common squirrel monkey)).